A 352-amino-acid chain; its full sequence is 3-isopropylmalate dehydrogenase (352 aa).

Positions 91, 101, 129, and 218 each coordinate substrate. The Mg(2+) site is built by Asp218, Asp242, and Asp246. Residue Gly281–Asn293 coordinates NAD(+).

Belongs to the isocitrate and isopropylmalate dehydrogenases family. LeuB type 1 subfamily. In terms of assembly, homodimer. It depends on Mg(2+) as a cofactor. Mn(2+) serves as cofactor.

It localises to the cytoplasm. The enzyme catalyses (2R,3S)-3-isopropylmalate + NAD(+) = 4-methyl-2-oxopentanoate + CO2 + NADH. Its pathway is amino-acid biosynthesis; L-leucine biosynthesis; L-leucine from 3-methyl-2-oxobutanoate: step 3/4. In terms of biological role, catalyzes the oxidation of 3-carboxy-2-hydroxy-4-methylpentanoate (3-isopropylmalate) to 3-carboxy-4-methyl-2-oxopentanoate. The product decarboxylates to 4-methyl-2 oxopentanoate. The protein is 3-isopropylmalate dehydrogenase of Novosphingobium aromaticivorans (strain ATCC 700278 / DSM 12444 / CCUG 56034 / CIP 105152 / NBRC 16084 / F199).